The sequence spans 66 residues: Large ribosomal subunit protein bL35c (66 aa).

The protein belongs to the bacterial ribosomal protein bL35 family.

Its subcellular location is the plastid. It localises to the chloroplast. The sequence is that of Large ribosomal subunit protein bL35c from Guillardia theta (Cryptophyte).